Here is a 177-residue protein sequence, read N- to C-terminus: Peptide methionine sulfoxide reductase MsrA 2 (177 aa).

Cys12 is a catalytic residue.

It belongs to the MsrA Met sulfoxide reductase family.

The enzyme catalyses L-methionyl-[protein] + [thioredoxin]-disulfide + H2O = L-methionyl-(S)-S-oxide-[protein] + [thioredoxin]-dithiol. It catalyses the reaction [thioredoxin]-disulfide + L-methionine + H2O = L-methionine (S)-S-oxide + [thioredoxin]-dithiol. Functionally, has an important function as a repair enzyme for proteins that have been inactivated by oxidation. Catalyzes the reversible oxidation-reduction of methionine sulfoxide in proteins to methionine. This is Peptide methionine sulfoxide reductase MsrA 2 (msrA2) from Staphylococcus aureus (strain NCTC 8325 / PS 47).